Consider the following 51-residue polypeptide: Large ribosomal subunit protein eL39 (51 aa).

The interval 1-22 (MPSQKSFRTKQKLAKAQKQNRP) is disordered.

This sequence belongs to the eukaryotic ribosomal protein eL39 family. In terms of assembly, interacts with YIH1.

The polypeptide is Large ribosomal subunit protein eL39 (RPL39) (Debaryomyces hansenii (strain ATCC 36239 / CBS 767 / BCRC 21394 / JCM 1990 / NBRC 0083 / IGC 2968) (Yeast)).